The following is a 34-amino-acid chain: Photosystem II reaction center protein M (34 aa).

A helical membrane pass occupies residues 5–25; the sequence is ILAFIATALFILVPTAFLLII.

Belongs to the PsbM family. PSII is composed of 1 copy each of membrane proteins PsbA, PsbB, PsbC, PsbD, PsbE, PsbF, PsbH, PsbI, PsbJ, PsbK, PsbL, PsbM, PsbT, PsbX, PsbY, PsbZ, Psb30/Ycf12, at least 3 peripheral proteins of the oxygen-evolving complex and a large number of cofactors. It forms dimeric complexes.

The protein localises to the plastid. The protein resides in the chloroplast thylakoid membrane. In terms of biological role, one of the components of the core complex of photosystem II (PSII). PSII is a light-driven water:plastoquinone oxidoreductase that uses light energy to abstract electrons from H(2)O, generating O(2) and a proton gradient subsequently used for ATP formation. It consists of a core antenna complex that captures photons, and an electron transfer chain that converts photonic excitation into a charge separation. This subunit is found at the monomer-monomer interface. This chain is Photosystem II reaction center protein M, found in Coffea arabica (Arabian coffee).